The following is a 238-amino-acid chain: Ribonuclease PH (238 aa).

Phosphate is bound by residues Arg86 and 124–126; that span reads GTR.

This sequence belongs to the RNase PH family. As to quaternary structure, homohexameric ring arranged as a trimer of dimers.

It carries out the reaction tRNA(n+1) + phosphate = tRNA(n) + a ribonucleoside 5'-diphosphate. Phosphorolytic 3'-5' exoribonuclease that plays an important role in tRNA 3'-end maturation. Removes nucleotide residues following the 3'-CCA terminus of tRNAs; can also add nucleotides to the ends of RNA molecules by using nucleoside diphosphates as substrates, but this may not be physiologically important. Probably plays a role in initiation of 16S rRNA degradation (leading to ribosome degradation) during starvation. The protein is Ribonuclease PH of Maricaulis maris (strain MCS10) (Caulobacter maris).